The primary structure comprises 495 residues: uncharacterized protein (495 aa).

Its subcellular location is the cytoplasm. The protein resides in the nucleus. This is an uncharacterized protein from Saccharomyces cerevisiae (strain ATCC 204508 / S288c) (Baker's yeast).